Here is a 156-residue protein sequence, read N- to C-terminus: MTTKKQPDSTIALNRKAGFDYFIEDQYEAGLVLEGWEVKSLRAGKINLSDSHVIIKYGEAFLLGAQIQPLPTASTHFIPDPVRTRKLLMNKKELNHLIGSVERQGYTIVPLSLYWKKNKIKIKIALAKGKKEHDKRDTIKDREWQRDRSRIMKKNT.

Basic and acidic residues predominate over residues 135–150 (KRDTIKDREWQRDRSR). Residues 135–156 (KRDTIKDREWQRDRSRIMKKNT) are disordered.

This sequence belongs to the SmpB family.

It localises to the cytoplasm. Its function is as follows. Required for rescue of stalled ribosomes mediated by trans-translation. Binds to transfer-messenger RNA (tmRNA), required for stable association of tmRNA with ribosomes. tmRNA and SmpB together mimic tRNA shape, replacing the anticodon stem-loop with SmpB. tmRNA is encoded by the ssrA gene; the 2 termini fold to resemble tRNA(Ala) and it encodes a 'tag peptide', a short internal open reading frame. During trans-translation Ala-aminoacylated tmRNA acts like a tRNA, entering the A-site of stalled ribosomes, displacing the stalled mRNA. The ribosome then switches to translate the ORF on the tmRNA; the nascent peptide is terminated with the 'tag peptide' encoded by the tmRNA and targeted for degradation. The ribosome is freed to recommence translation, which seems to be the essential function of trans-translation. In Legionella pneumophila (strain Paris), this protein is SsrA-binding protein.